The primary structure comprises 96 residues: Molybdopterin synthase sulfur carrier subunit (96 aa).

Gly96 carries the 1-thioglycine; alternate modification. At Gly96 the chain carries Glycyl adenylate; alternate.

Belongs to the MoaD family. MOCS2A subfamily. In terms of assembly, heterotetramer; composed of 2 small (MOCS2A) and 2 large (MOCS2B) subunits. In terms of processing, C-terminal thiocarboxylation occurs in 2 steps, it is first acyl-adenylated (-COAMP) via the hesA/moeB/thiF part of MOCS3, then thiocarboxylated (-COSH) via the rhodanese domain of MOCS3.

The protein resides in the cytoplasm. Its pathway is cofactor biosynthesis; molybdopterin biosynthesis. In terms of biological role, acts as a sulfur carrier required for molybdopterin biosynthesis. Component of the molybdopterin synthase complex that catalyzes the conversion of precursor Z into molybdopterin by mediating the incorporation of 2 sulfur atoms into precursor Z to generate a dithiolene group. In the complex, serves as sulfur donor by being thiocarboxylated (-COSH) at its C-terminus by MOCS3. After interaction with MOCS2B, the sulfur is then transferred to precursor Z to form molybdopterin. The sequence is that of Molybdopterin synthase sulfur carrier subunit from Arabidopsis thaliana (Mouse-ear cress).